Reading from the N-terminus, the 357-residue chain is MIMAGGTGGHVFPGLAVARSMQANGWRIVWLGTRNGMEAALVPQHGFSIELINFSGLRGKKLSSYLLLPWRLAQACWQSFRILRRQQPQVVLGMGGYPALPGGIMAVLLGKPLLIHEQNRIAGLTNKILAKIADRILLAFPGALTSPENKTRVTGNPVRTEIARLPSPEARYAHRTGNLHILVVGGSLGAQVLNTVLPQALSMIPEDQRPYVTHQSGKAHLDALQQAYADHGVTGNLVAFIENMAAHYQDCDLVICRAGALTISELAAAGVASILIPYPYAVDDHQTANARFLSDYQAAVLWPQSELTAASLAQWLMTCSRAQLQSMATHARALAMPEAAQTVAEACQQLSGQTNEA.

UDP-N-acetyl-alpha-D-glucosamine-binding positions include 7–9, asparagine 119, arginine 159, serine 187, isoleucine 241, and glutamine 286; that span reads TGG.

This sequence belongs to the glycosyltransferase 28 family. MurG subfamily.

The protein resides in the cell inner membrane. The enzyme catalyses di-trans,octa-cis-undecaprenyl diphospho-N-acetyl-alpha-D-muramoyl-L-alanyl-D-glutamyl-meso-2,6-diaminopimeloyl-D-alanyl-D-alanine + UDP-N-acetyl-alpha-D-glucosamine = di-trans,octa-cis-undecaprenyl diphospho-[N-acetyl-alpha-D-glucosaminyl-(1-&gt;4)]-N-acetyl-alpha-D-muramoyl-L-alanyl-D-glutamyl-meso-2,6-diaminopimeloyl-D-alanyl-D-alanine + UDP + H(+). Its pathway is cell wall biogenesis; peptidoglycan biosynthesis. Functionally, cell wall formation. Catalyzes the transfer of a GlcNAc subunit on undecaprenyl-pyrophosphoryl-MurNAc-pentapeptide (lipid intermediate I) to form undecaprenyl-pyrophosphoryl-MurNAc-(pentapeptide)GlcNAc (lipid intermediate II). This chain is UDP-N-acetylglucosamine--N-acetylmuramyl-(pentapeptide) pyrophosphoryl-undecaprenol N-acetylglucosamine transferase, found in Nitrosomonas europaea (strain ATCC 19718 / CIP 103999 / KCTC 2705 / NBRC 14298).